A 355-amino-acid chain; its full sequence is Anthranilate phosphoribosyltransferase (355 aa).

Residues G102, 105 to 106 (GD), S110, 112 to 115 (NIST), 130 to 138 (KHGNRSVSS), and S142 contribute to the 5-phospho-alpha-D-ribose 1-diphosphate site. G102 serves as a coordination point for anthranilate. Position 114 (S114) interacts with Mg(2+). An anthranilate-binding site is contributed by N133. Residue R188 participates in anthranilate binding. Positions 246 and 247 each coordinate Mg(2+).

This sequence belongs to the anthranilate phosphoribosyltransferase family. In terms of assembly, homodimer. It depends on Mg(2+) as a cofactor.

It catalyses the reaction N-(5-phospho-beta-D-ribosyl)anthranilate + diphosphate = 5-phospho-alpha-D-ribose 1-diphosphate + anthranilate. The protein operates within amino-acid biosynthesis; L-tryptophan biosynthesis; L-tryptophan from chorismate: step 2/5. In terms of biological role, catalyzes the transfer of the phosphoribosyl group of 5-phosphorylribose-1-pyrophosphate (PRPP) to anthranilate to yield N-(5'-phosphoribosyl)-anthranilate (PRA). The protein is Anthranilate phosphoribosyltransferase of Pectobacterium atrosepticum (strain SCRI 1043 / ATCC BAA-672) (Erwinia carotovora subsp. atroseptica).